We begin with the raw amino-acid sequence, 132 residues long: Small ribosomal subunit protein uS13 (132 aa).

Residues 101-125 show a composition bias toward basic residues; it reads RGLPVRGQRTKTNARTRKGPRKTVA. Positions 101 to 132 are disordered; that stretch reads RGLPVRGQRTKTNARTRKGPRKTVANKKIETR.

The protein belongs to the universal ribosomal protein uS13 family. Part of the 30S ribosomal subunit. Forms a loose heterodimer with protein S19. Forms two bridges to the 50S subunit in the 70S ribosome.

Located at the top of the head of the 30S subunit, it contacts several helices of the 16S rRNA. In the 70S ribosome it contacts the 23S rRNA (bridge B1a) and protein L5 of the 50S subunit (bridge B1b), connecting the 2 subunits; these bridges are implicated in subunit movement. Contacts the tRNAs in the A and P-sites. In Ureaplasma urealyticum serovar 10 (strain ATCC 33699 / Western), this protein is Small ribosomal subunit protein uS13.